Reading from the N-terminus, the 298-residue chain is D-alanine--D-alanine ligase (298 aa).

Residues 97–290 (FYSLFKNYIQ…FDELINIIIK (194 aa)) enclose the ATP-grasp domain. Residue 124 to 173 (PFIIKPRKSGSSKGVYIIHNENEYKFYLEKDLKEFQEVLVQEYIKGREIT) coordinates ATP. Residues D245, E257, and N259 each coordinate Mg(2+).

Belongs to the D-alanine--D-alanine ligase family. Mg(2+) is required as a cofactor. It depends on Mn(2+) as a cofactor.

It localises to the cytoplasm. It catalyses the reaction 2 D-alanine + ATP = D-alanyl-D-alanine + ADP + phosphate + H(+). Its pathway is cell wall biogenesis; peptidoglycan biosynthesis. Its function is as follows. Cell wall formation. This chain is D-alanine--D-alanine ligase, found in Petrotoga mobilis (strain DSM 10674 / SJ95).